The sequence spans 547 residues: Delta-guaiene synthase 1 (547 aa).

Mg(2+) contacts are provided by aspartate 299, aspartate 303, and aspartate 444. The DDXXD motif signature appears at 299 to 303 (DDTYD).

This sequence belongs to the terpene synthase family. Mg(2+) is required as a cofactor.

The enzyme catalyses (2E,6E)-farnesyl diphosphate = delta-guaiene + diphosphate. It catalyses the reaction (2E,6E)-farnesyl diphosphate = alpha-guaiene + diphosphate. It participates in secondary metabolite biosynthesis; terpenoid biosynthesis. Sesquiterpene synthase involved in the biosynthesis of delta-guaiene (81.2%) and alpha-guaiene (18.1%), two structures composed of five- and seven-membered rings. Also produces 0.7% of alpha-humulene. The protein is Delta-guaiene synthase 1 (C2) of Aquilaria crassna (Eagle wood).